We begin with the raw amino-acid sequence, 237 residues long: uncharacterized protein (237 aa).

Positions 1-25 form a signal peptide, tat-type signal; it reads MRHIFQRLLPRRLWLAGLPCLALLG. The interval 201–237 is disordered; that stretch reads IERQLSTRKPAGNFSPDTPHESEKPAPSTHEVTPDEP.

In terms of processing, exported by the Tat system. The position of the signal peptide cleavage has not been experimentally proven. Can also be exported by the Sec system.

This is an uncharacterized protein from Escherichia coli (strain K12).